The primary structure comprises 384 residues: Dual-specificity RNA methyltransferase RlmN (384 aa).

Catalysis depends on E105, which acts as the Proton acceptor. One can recognise a Radical SAM core domain in the interval 111 to 350 (EDDRATLCVS…TIVRKTRGDD (240 aa)). The cysteines at positions 118 and 355 are disulfide-linked. [4Fe-4S] cluster is bound by residues C125, C129, and C132. Residues 179–180 (GE), S211, 233–235 (SLH), and N312 contribute to the S-adenosyl-L-methionine site. Catalysis depends on C355, which acts as the S-methylcysteine intermediate.

Belongs to the radical SAM superfamily. RlmN family. Requires [4Fe-4S] cluster as cofactor.

Its subcellular location is the cytoplasm. It catalyses the reaction adenosine(2503) in 23S rRNA + 2 reduced [2Fe-2S]-[ferredoxin] + 2 S-adenosyl-L-methionine = 2-methyladenosine(2503) in 23S rRNA + 5'-deoxyadenosine + L-methionine + 2 oxidized [2Fe-2S]-[ferredoxin] + S-adenosyl-L-homocysteine. The enzyme catalyses adenosine(37) in tRNA + 2 reduced [2Fe-2S]-[ferredoxin] + 2 S-adenosyl-L-methionine = 2-methyladenosine(37) in tRNA + 5'-deoxyadenosine + L-methionine + 2 oxidized [2Fe-2S]-[ferredoxin] + S-adenosyl-L-homocysteine. Specifically methylates position 2 of adenine 2503 in 23S rRNA and position 2 of adenine 37 in tRNAs. m2A2503 modification seems to play a crucial role in the proofreading step occurring at the peptidyl transferase center and thus would serve to optimize ribosomal fidelity. In Shigella boydii serotype 18 (strain CDC 3083-94 / BS512), this protein is Dual-specificity RNA methyltransferase RlmN.